Here is a 274-residue protein sequence, read N- to C-terminus: 3-methyl-2-oxobutanoate hydroxymethyltransferase (274 aa).

Mg(2+) is bound by residues Asp-44 and Asp-83. 3-methyl-2-oxobutanoate-binding positions include 44 to 45 (DS), Asp-83, and Lys-113. Mg(2+) is bound at residue Glu-115. Residue Glu-182 is the Proton acceptor of the active site.

The protein belongs to the PanB family. In terms of assembly, homodecamer; pentamer of dimers. It depends on Mg(2+) as a cofactor.

The protein resides in the cytoplasm. The enzyme catalyses 3-methyl-2-oxobutanoate + (6R)-5,10-methylene-5,6,7,8-tetrahydrofolate + H2O = 2-dehydropantoate + (6S)-5,6,7,8-tetrahydrofolate. The protein operates within cofactor biosynthesis; (R)-pantothenate biosynthesis; (R)-pantoate from 3-methyl-2-oxobutanoate: step 1/2. Functionally, catalyzes the reversible reaction in which hydroxymethyl group from 5,10-methylenetetrahydrofolate is transferred onto alpha-ketoisovalerate to form ketopantoate. The chain is 3-methyl-2-oxobutanoate hydroxymethyltransferase from Campylobacter jejuni (strain RM1221).